A 597-amino-acid chain; its full sequence is Aspartate--tRNA(Asp/Asn) ligase (597 aa).

E175 lines the L-aspartate pocket. Positions 199–202 (QQYK) are aspartate. Residues R221 and H454 each contribute to the L-aspartate site. 221–223 (RDE) is a binding site for ATP. E488 serves as a coordination point for ATP. Position 495 (R495) interacts with L-aspartate. 540 to 543 (GVDR) is a binding site for ATP.

This sequence belongs to the class-II aminoacyl-tRNA synthetase family. Type 1 subfamily. As to quaternary structure, homodimer.

It is found in the cytoplasm. It carries out the reaction tRNA(Asx) + L-aspartate + ATP = L-aspartyl-tRNA(Asx) + AMP + diphosphate. In terms of biological role, aspartyl-tRNA synthetase with relaxed tRNA specificity since it is able to aspartylate not only its cognate tRNA(Asp) but also tRNA(Asn). Reaction proceeds in two steps: L-aspartate is first activated by ATP to form Asp-AMP and then transferred to the acceptor end of tRNA(Asp/Asn). The polypeptide is Aspartate--tRNA(Asp/Asn) ligase (Bartonella quintana (strain Toulouse) (Rochalimaea quintana)).